We begin with the raw amino-acid sequence, 858 residues long: Conidiophore development regulator abaA (858 aa).

Residues 1-22 are disordered; it reads MSSSLYHPRPVLSSQRYTPSPD. Positions 128–221 form a DNA-binding region, TEA; sequence QKDKGGVWRR…QVVKKFFEDL (94 aa). Basic and acidic residues predominate over residues 500-522; that stretch reads VEHQRKKEKRTKGDDRKNLDRAG. Disordered stretches follow at residues 500–535 and 792–858; these read VEHQRKKEKRTKGDDRKNLDRAGSKRKRSEDDGDAA and TGAG…AGGW. The Nuclear localization signal motif lies at 514–521; it reads DRKNLDRA. A compositionally biased stretch (polar residues) spans 809 to 822; that stretch reads SSDQTALWTQSQWA.

The protein belongs to the TEC1 family.

It is found in the nucleus. AbaA and wetA are pivotal regulators of conidiophore development and conidium maturation. They act individually and together to regulate their own expression and that of numerous other sporulation-specific genes. Binds to the sequence 5'-CATTCY-3', where Y is a pyrimidine, making both major- and minor-groove contacts. Plays a pivotal role in conidiation by regulating cell cycle pathways and other conidiation-related genes. This is Conidiophore development regulator abaA from Gibberella zeae (strain ATCC MYA-4620 / CBS 123657 / FGSC 9075 / NRRL 31084 / PH-1) (Wheat head blight fungus).